The chain runs to 381 residues: UDP-N-acetylglucosamine--N-acetylmuramyl-(pentapeptide) pyrophosphoryl-undecaprenol N-acetylglucosamine transferase (381 aa).

Residues 10-12 (TGG), Asn-124, Arg-165, Ser-207, Ile-263, and Gln-308 each bind UDP-N-acetyl-alpha-D-glucosamine.

Belongs to the glycosyltransferase 28 family. MurG subfamily.

The protein localises to the cell inner membrane. The enzyme catalyses di-trans,octa-cis-undecaprenyl diphospho-N-acetyl-alpha-D-muramoyl-L-alanyl-D-glutamyl-meso-2,6-diaminopimeloyl-D-alanyl-D-alanine + UDP-N-acetyl-alpha-D-glucosamine = di-trans,octa-cis-undecaprenyl diphospho-[N-acetyl-alpha-D-glucosaminyl-(1-&gt;4)]-N-acetyl-alpha-D-muramoyl-L-alanyl-D-glutamyl-meso-2,6-diaminopimeloyl-D-alanyl-D-alanine + UDP + H(+). The protein operates within cell wall biogenesis; peptidoglycan biosynthesis. Functionally, cell wall formation. Catalyzes the transfer of a GlcNAc subunit on undecaprenyl-pyrophosphoryl-MurNAc-pentapeptide (lipid intermediate I) to form undecaprenyl-pyrophosphoryl-MurNAc-(pentapeptide)GlcNAc (lipid intermediate II). The protein is UDP-N-acetylglucosamine--N-acetylmuramyl-(pentapeptide) pyrophosphoryl-undecaprenol N-acetylglucosamine transferase of Trichlorobacter lovleyi (strain ATCC BAA-1151 / DSM 17278 / SZ) (Geobacter lovleyi).